The primary structure comprises 373 residues: 8-amino-7-oxononanoate synthase (373 aa).

Residue Arg16 coordinates substrate. Pyridoxal 5'-phosphate is bound at residue 93–94; the sequence is GF. His118 provides a ligand contact to substrate. Residues Ser165, 190 to 193, and 222 to 225 each bind pyridoxal 5'-phosphate; these read DEAH and TFSK. At Lys225 the chain carries N6-(pyridoxal phosphate)lysine. Thr334 is a binding site for substrate.

The protein belongs to the class-II pyridoxal-phosphate-dependent aminotransferase family. BioF subfamily. Homodimer. Pyridoxal 5'-phosphate is required as a cofactor.

The catalysed reaction is 6-carboxyhexanoyl-[ACP] + L-alanine + H(+) = (8S)-8-amino-7-oxononanoate + holo-[ACP] + CO2. It functions in the pathway cofactor biosynthesis; biotin biosynthesis. Functionally, catalyzes the decarboxylative condensation of pimeloyl-[acyl-carrier protein] and L-alanine to produce 8-amino-7-oxononanoate (AON), [acyl-carrier protein], and carbon dioxide. This chain is 8-amino-7-oxononanoate synthase, found in Helicobacter pylori (strain ATCC 700392 / 26695) (Campylobacter pylori).